The primary structure comprises 309 residues: PI-PLC X domain-containing protein 1 (309 aa).

The PI-PLC X-box domain maps to 17-193 (HMWDIPLWNL…QVILSYDDES (177 aa)).

In Danio rerio (Zebrafish), this protein is PI-PLC X domain-containing protein 1 (plcxd1).